Consider the following 379-residue polypeptide: 3-dehydroquinate synthase (379 aa).

Residues 67–72 (SGEKNK), 101–105 (GVVLD), 125–126 (TT), lysine 138, and lysine 147 each bind NAD(+). 3 residues coordinate Zn(2+): glutamate 180, histidine 242, and histidine 258.

Belongs to the sugar phosphate cyclases superfamily. Dehydroquinate synthase family. The cofactor is NAD(+). It depends on Co(2+) as a cofactor. Zn(2+) is required as a cofactor.

The protein localises to the cytoplasm. The catalysed reaction is 7-phospho-2-dehydro-3-deoxy-D-arabino-heptonate = 3-dehydroquinate + phosphate. It functions in the pathway metabolic intermediate biosynthesis; chorismate biosynthesis; chorismate from D-erythrose 4-phosphate and phosphoenolpyruvate: step 2/7. In terms of biological role, catalyzes the conversion of 3-deoxy-D-arabino-heptulosonate 7-phosphate (DAHP) to dehydroquinate (DHQ). The sequence is that of 3-dehydroquinate synthase from Chlamydia abortus (strain DSM 27085 / S26/3) (Chlamydophila abortus).